The sequence spans 242 residues: Protein GrpE (242 aa).

Over residues 1 to 10 the composition is skewed to polar residues; that stretch reads MAGENSSTET. The tract at residues 1–64 is disordered; the sequence is MAGENSSTET…QSTESTSKEK (64 aa). Over residues 11–20 the composition is skewed to basic and acidic residues; the sequence is KNQEINEKTP. Composition is skewed to polar residues over residues 21–32 and 40–59; these read EVQTFETNVEFE and DTEL…STES.

Belongs to the GrpE family. Homodimer.

It localises to the cytoplasm. Participates actively in the response to hyperosmotic and heat shock by preventing the aggregation of stress-denatured proteins, in association with DnaK and GrpE. It is the nucleotide exchange factor for DnaK and may function as a thermosensor. Unfolded proteins bind initially to DnaJ; upon interaction with the DnaJ-bound protein, DnaK hydrolyzes its bound ATP, resulting in the formation of a stable complex. GrpE releases ADP from DnaK; ATP binding to DnaK triggers the release of the substrate protein, thus completing the reaction cycle. Several rounds of ATP-dependent interactions between DnaJ, DnaK and GrpE are required for fully efficient folding. The polypeptide is Protein GrpE (Trichodesmium erythraeum (strain IMS101)).